We begin with the raw amino-acid sequence, 540 residues long: SNW/SKI-interacting protein B (540 aa).

Disordered stretches follow at residues 1–106 (MVLR…SLTV), 215–273 (GETQ…NPKG), 351–402 (GAAP…RDRD), and 502–526 (ASVAAGKRERPVEFDGPEMEEDPFH). 2 stretches are compositionally biased toward basic and acidic residues: residues 16-29 (PHDHTEDEWFKERY) and 83-94 (MGRRGGDGDGEQ). An SNW region spans residues 189-353 (PEFIKYTPAR…KARAEMLGAA (165 aa)). The span at 236–251 (AGSPPVPVLRSPPRPP) shows a compositional bias: pro residues. Positions 359 to 382 (ERSKAAAERDAIREERRRERRLEA) are enriched in basic and acidic residues. Residues 383-393 (RAAAAAASKKS) show a composition bias toward low complexity.

It belongs to the SNW family.

Its subcellular location is the nucleus. This is SNW/SKI-interacting protein B from Oryza sativa subsp. japonica (Rice).